Consider the following 472-residue polypeptide: Zinc finger CCCH domain-containing protein 59 (472 aa).

The tract at residues 87–139 (YKSPEGNRPRQNAANGSAKPQVIGTGHRVSNQPRKNAVYGPRSSSLSDTRGCG) is disordered. The C3H1-type zinc-finger motif lies at 145 to 172 (SPKKSVCNFWKDGNCKKGEKCQFLHSWS). 5 WD repeats span residues 185-226 (GHKN…RSIN), 261-301 (HLEG…SDPF), 310-347 (HHSG…CRMT), 350-387 (QHIG…SLKV), and 436-472 (FSTQ…GTKV).

The polypeptide is Zinc finger CCCH domain-containing protein 59 (ZFWD3) (Arabidopsis thaliana (Mouse-ear cress)).